Here is a 136-residue protein sequence, read N- to C-terminus: Ubiquinol-cytochrome c reductase complex assembly factor 4 (136 aa).

The first 15 residues, 1–15 (MNSVLCSRAAGAVRA), serve as a signal peptide directing secretion. At 16 to 80 (LRLVGWASRS…GKPQQRPWWK (65 aa)) the chain is on the mitochondrial matrix side. Positions 26-58 (LHPPPRGRSPAQPADREEEDDDPNLPIQFSGSK) are disordered. A helical transmembrane segment spans residues 81–97 (VLPLTLTLVALVVWCYQ). Residues 98–136 (REESGMDLWLRQVLEEEDEEEPEGPPEELEAPALYGART) are Mitochondrial intermembrane-facing. Residues 112 to 127 (EEEDEEEPEGPPEELE) are compositionally biased toward acidic residues. Positions 112-136 (EEEDEEEPEGPPEELEAPALYGART) are disordered.

This sequence belongs to the UQCC4 family. Forms a complex, named COMB/coordinator of mitochondrial CYTB biogenesis, composed of UQCC1, UQCC2, UQCC4, UQCC5 and UQCC6; stabilizes nascent cytochrome b/MT-CYB and promotes its membrane insertion. Forms a complex, named COMA, composed of UQCC1, UQCC2 and UQCC4; activates MT-CYB translation. Forms a complex, named COMC, composed of UQCC1, UQCC2; UQCC3 and UQCC4; mediates MT-CYB hemylation and association with the first nuclear-encoded complex III subunit UQCRQ. Complexes COMA and COMB are bound to the mitochondrion inner membrane by UQCC4.

Its subcellular location is the mitochondrion inner membrane. Required for the assembly and stability of the mitochondrial ubiquinol-cytochrome c reductase complex (complex III (CIII) or cytochrome b-c1 complex), a multisubunit transmembrane complex that is part of the mitochondrial electron transport chain (ETC) which drives oxidative phosphorylation. The sequence is that of Ubiquinol-cytochrome c reductase complex assembly factor 4 (Uqcc4) from Mus musculus (Mouse).